Consider the following 364-residue polypeptide: Putative agmatine deiminase 1 (364 aa).

The active-site Amidino-cysteine intermediate is the cysteine 356.

The protein belongs to the agmatine deiminase family.

It catalyses the reaction agmatine + H2O = N-carbamoylputrescine + NH4(+). The sequence is that of Putative agmatine deiminase 1 from Listeria monocytogenes serotype 4b (strain F2365).